A 496-amino-acid polypeptide reads, in one-letter code: Angiopoietin-2 (496 aa).

Residues 1–18 (MWQIVFLTFGCDLVLASA) form the signal peptide. N-linked (GlcNAc...) asparagine glycosylation is found at N89, N119, N133, N151, N240, and N304. Positions 159-256 (QLLQHSISTN…QQHDLMETVN (98 aa)) form a coiled coil. Residues 280-496 (TFRDCAEIFK…TTMMIRPADF (217 aa)) enclose the Fibrinogen C-terminal domain. An intrachain disulfide couples C284 to C313. Ca(2+) is bound by residues D429, D431, C433, and C435. 2 cysteine pairs are disulfide-bonded: C433/C435 and C437/C450.

Interacts with TEK/TIE2, competing for the same binding site as ANGPT1. Interacts with ITGA5. Interacts with SVEP1/polydom. Interacts with THBD; this interaction significantly inhibits the generation of activated PC and TAFIa/CPB2 by the thrombin/thrombomodulin complex.

Its subcellular location is the secreted. Binds to TEK/TIE2, competing for the ANGPT1 binding site, and modulating ANGPT1 signaling. Can induce tyrosine phosphorylation of TEK/TIE2 in the absence of ANGPT1. In the absence of angiogenic inducers, such as VEGF, ANGPT2-mediated loosening of cell-matrix contacts may induce endothelial cell apoptosis with consequent vascular regression. In concert with VEGF, it may facilitate endothelial cell migration and proliferation, thus serving as a permissive angiogenic signal. Involved in the regulation of lymphangiogenesis. This Rattus norvegicus (Rat) protein is Angiopoietin-2 (Angpt2).